Here is a 240-residue protein sequence, read N- to C-terminus: MEIQGLTIAYKQKVAIDNVTLQIASGKLTGIVGPNGAGKSTLLKGMMGLIPREQGQVTLADKPLTYWRKKIAYVPQRSEVDLTFPITVFDMVLLGTYPALGLIKRPGKKEKQLALDALEQVEMTGFMKRQIGELSGGQLQRVFIARALAQHAEIFFLDEPFAGIDMTSEALIMRLLKKLRDNGKTIVVVHHDFHKVAAYFDDIILLNKKLVAHGPVEQTFTEEKIQFAYGDAPVAFAAGV.

Positions 1-233 (MEIQGLTIAY…KIQFAYGDAP (233 aa)) constitute an ABC transporter domain. 33–40 (GPNGAGKS) lines the ATP pocket.

This sequence belongs to the ABC transporter superfamily.

It is found in the cell membrane. Functionally, this protein is probably a component of a manganese permease, a binding protein-dependent, ATP-driven transport system. Probably responsible for energy coupling to the transport system. This is Manganese transport system ATP-binding protein MntB (mntB) from Listeria monocytogenes serovar 1/2a (strain ATCC BAA-679 / EGD-e).